We begin with the raw amino-acid sequence, 666 residues long: ATP-dependent RNA helicase DDX51 (666 aa).

The residue at position 2 (A2) is an N-acetylalanine. The interval 9 to 152 (YPGPDAAAAA…AAPDGPALEE (144 aa)) is disordered. The span at 10 to 28 (PGPDAAAAAGPEGAEAGAH) shows a compositional bias: low complexity. Positions 33 to 48 (ALLERLQSRARERQQQ) are enriched in basic and acidic residues. Positions 49 to 58 (REPAQTEAAA) are enriched in low complexity. A compositionally biased stretch (basic residues) spans 65–75 (RRRRRPRRRRR). S83 and S103 each carry phosphoserine. Residues 97 to 108 (EDAGAESNEEAP) show a composition bias toward acidic residues. Residues 221-229 (YFPVQAAVI) carry the Q motif motif. The 210-residue stretch at 243-452 (GRGGYRPSDL…QLGLHQPRLF (210 aa)) folds into the Helicase ATP-binding domain. 256–263 (APTGSGKT) is a binding site for ATP. A DEAD box motif is present at residues 371 to 374 (DEAD). A Helicase C-terminal domain is found at 494 to 640 (VVLHLVLEMG…RHELSSKLLQ (147 aa)).

The protein belongs to the DEAD box helicase family. DDX51/DBP6 subfamily.

Its subcellular location is the nucleus. It localises to the nucleolus. It carries out the reaction ATP + H2O = ADP + phosphate + H(+). In terms of biological role, ATP-binding RNA helicase involved in the biogenesis of 60S ribosomal subunits. The polypeptide is ATP-dependent RNA helicase DDX51 (DDX51) (Homo sapiens (Human)).